Reading from the N-terminus, the 311-residue chain is Mediator of RNA polymerase II transcription subunit 27 (311 aa).

The residue at position 132 (Ser-132) is a Phosphoserine. Lys-134 is subject to N6-methyllysine.

It belongs to the Mediator complex subunit 27 family. As to quaternary structure, component of the Mediator complex, which is composed of MED1, MED4, MED6, MED7, MED8, MED9, MED10, MED11, MED12, MED13, MED13L, MED14, MED15, MED16, MED17, MED18, MED19, MED20, MED21, MED22, MED23, MED24, MED25, MED26, MED27, MED29, MED30, MED31, CCNC, CDK8 and CDC2L6/CDK11. The MED12, MED13, CCNC and CDK8 subunits form a distinct module termed the CDK8 module. Mediator containing the CDK8 module is less active than Mediator lacking this module in supporting transcriptional activation. Individual preparations of the Mediator complex lacking one or more distinct subunits have been variously termed ARC, CRSP, DRIP, PC2, SMCC and TRAP.

It localises to the nucleus. In terms of biological role, component of the Mediator complex, a coactivator involved in the regulated transcription of nearly all RNA polymerase II-dependent genes. Mediator functions as a bridge to convey information from gene-specific regulatory proteins to the basal RNA polymerase II transcription machinery. Mediator is recruited to promoters by direct interactions with regulatory proteins and serves as a scaffold for the assembly of a functional preinitiation complex with RNA polymerase II and the general transcription factors. The chain is Mediator of RNA polymerase II transcription subunit 27 (MED27) from Homo sapiens (Human).